The following is a 308-amino-acid chain: Apolipoprotein E (308 aa).

The N-terminal stretch at 1 to 18 (MKFLWAALVVTLLAGCRA) is a signal peptide. Tandem repeats lie at residues 75-96 (LLIEETMKEVKAYKEELEKQVG), 97-118 (PIAQETQARLSKELQAAQARLE), 119-140 (SDMEDVRTRLAQYRSEAQAALG), 141-162 (QNTDDLQGRLASHLRKLRKRLL), 163-184 (RDAEDLQKRLAVYQAGTHEAAE), 185-206 (RGVSAIHERLGPLMMEGPLQAI), 207-224 (PPSQQLRERAEAWGQKVR), and 225-246 (GRLESVGSQARDRLDDMRDQME). The tract at residues 75–246 (LLIEETMKEV…RLDDMRDQME (172 aa)) is 8 X 22 AA approximate tandem repeats. Residues 153–163 (HLRKLRKRLLR) form an LDL and other lipoprotein receptors binding region. 157–160 (LRKR) provides a ligand contact to heparin. A lipid-binding and lipoprotein association region spans residues 205-281 (AIPPSQQLRE…SWFEPLVQDM (77 aa)). 220 to 227 (GQKVRGRL) is a binding site for heparin. A homooligomerization region spans residues 257 to 308 (SQVRLQAEAFQTRLKSWFEPLVQDMQRQWASLVEKVQSTLGISPSTKPSKTK). Residues 269–281 (RLKSWFEPLVQDM) are specificity for association with VLDL.

Belongs to the apolipoprotein A1/A4/E family. In terms of assembly, homotetramer. May interact with ABCA1; functionally associated with ABCA1 in the biogenesis of HDLs. May interact with APP/A4 amyloid-beta peptide; the interaction is extremely stable in vitro but its physiological significance is unclear. May interact with MAPT. May interact with MAP2. In the cerebrospinal fluid, interacts with secreted SORL1. Interacts with PMEL; this allows the loading of PMEL luminal fragment on ILVs to induce fibril nucleation. Post-translationally, APOE exists as multiple glycosylated and sialylated glycoforms within cells and in plasma. The extent of glycosylation and sialylation are tissue and context specific. In terms of processing, glycated in plasma VLDL. Phosphorylated by FAM20C in the extracellular medium.

The protein resides in the secreted. The protein localises to the extracellular space. Its subcellular location is the extracellular matrix. It is found in the extracellular vesicle. It localises to the endosome. The protein resides in the multivesicular body. Its function is as follows. APOE is an apolipoprotein, a protein associating with lipid particles, that mainly functions in lipoprotein-mediated lipid transport between organs via the plasma and interstitial fluids. APOE is a core component of plasma lipoproteins and is involved in their production, conversion and clearance. Apolipoproteins are amphipathic molecules that interact both with lipids of the lipoprotein particle core and the aqueous environment of the plasma. As such, APOE associates with chylomicrons, chylomicron remnants, very low density lipoproteins (VLDL) and intermediate density lipoproteins (IDL) but shows a preferential binding to high-density lipoproteins (HDL). It also binds a wide range of cellular receptors including the LDL receptor/LDLR and the very low-density lipoprotein receptor/VLDLR that mediate the cellular uptake of the APOE-containing lipoprotein particles. Finally, APOE also has a heparin-binding activity and binds heparan-sulfate proteoglycans on the surface of cells, a property that supports the capture and the receptor-mediated uptake of APOE-containing lipoproteins by cells. The chain is Apolipoprotein E (APOE) from Pteropus pselaphon (Bonin flying fox).